The primary structure comprises 318 residues: Homoserine kinase (318 aa).

Pro-97 to Cys-107 contributes to the ATP binding site.

This sequence belongs to the GHMP kinase family. Homoserine kinase subfamily.

It localises to the cytoplasm. The catalysed reaction is L-homoserine + ATP = O-phospho-L-homoserine + ADP + H(+). Its pathway is amino-acid biosynthesis; L-threonine biosynthesis; L-threonine from L-aspartate: step 4/5. Its function is as follows. Catalyzes the ATP-dependent phosphorylation of L-homoserine to L-homoserine phosphate. This is Homoserine kinase from Vibrio cholerae serotype O1 (strain M66-2).